The chain runs to 555 residues: Hydrogenase-4 component G (555 aa).

Belongs to the complex I 49 kDa subunit family. [4Fe-4S] cluster is required as a cofactor.

Possible component of hydrogenase 4. This Escherichia coli (strain K12) protein is Hydrogenase-4 component G.